A 341-amino-acid polypeptide reads, in one-letter code: MKVEEFDYELPEELIAQKPLPNRDDSRLMVLHRKTGEIEETVFKNIIKFLEPGDLLVLNDTKVIPARLFGEKIPSGTRIEVLLLKSITEGLWEVLVRPGRRMKKGNRVSFGDGKLVGIVKDYTDFGGRIMQFEYDGDFDKVIEELGEMPLPPYITRKVEDKGRYQTVYARKKGSVAAPTAGLHFTDRLLKKIKEQGIGIIYLTLHVGLGTFRPVRAENVEDHKMHSEYFEVSTDVVNRIKETKEKGKKVIAVGTTVTRALESAAVEKRHLKAMRGWTDIFIYPGYNFKVIDGLITNFHLPKSTLLMLVSAFAGKDMVMSAYKLAIKNKYRFFSFGDAMLIL.

The protein belongs to the QueA family. As to quaternary structure, monomer.

Its subcellular location is the cytoplasm. The catalysed reaction is 7-aminomethyl-7-carbaguanosine(34) in tRNA + S-adenosyl-L-methionine = epoxyqueuosine(34) in tRNA + adenine + L-methionine + 2 H(+). Its pathway is tRNA modification; tRNA-queuosine biosynthesis. Transfers and isomerizes the ribose moiety from AdoMet to the 7-aminomethyl group of 7-deazaguanine (preQ1-tRNA) to give epoxyqueuosine (oQ-tRNA). This is S-adenosylmethionine:tRNA ribosyltransferase-isomerase from Halothermothrix orenii (strain H 168 / OCM 544 / DSM 9562).